The following is a 204-amino-acid chain: Guanylate kinase (204 aa).

The Guanylate kinase-like domain maps to 18–196 (PKLFTISAPA…SYEVLKSIFI (179 aa)). Residue 25–32 (APAGAGKT) coordinates ATP.

Belongs to the guanylate kinase family.

The protein resides in the cytoplasm. The enzyme catalyses GMP + ATP = GDP + ADP. In terms of biological role, essential for recycling GMP and indirectly, cGMP. The protein is Guanylate kinase of Chlamydia abortus (strain DSM 27085 / S26/3) (Chlamydophila abortus).